A 99-amino-acid polypeptide reads, in one-letter code: Small integral membrane protein 14 (99 aa).

The Lumenal segment spans residues 1–49 (MAEGGFDPCECVCSHEHAMRRLINLLRQSQSYCTDTECLQELPGPSGDN). Residues 50–70 (GISVTMILVAWMVIALILFLL) form a helical membrane-spanning segment. Residues 71–99 (RPPNLRGSNLPGKPTSPHNGQDPPAPPVD) are Cytoplasmic-facing. The segment at 77 to 99 (GSNLPGKPTSPHNGQDPPAPPVD) is disordered.

It is found in the endoplasmic reticulum membrane. This chain is Small integral membrane protein 14 (SMIM14), found in Pongo abelii (Sumatran orangutan).